A 278-amino-acid chain; its full sequence is Urease accessory protein UreD 3 (278 aa).

This sequence belongs to the UreD family. As to quaternary structure, ureD, UreF and UreG form a complex that acts as a GTP-hydrolysis-dependent molecular chaperone, activating the urease apoprotein by helping to assemble the nickel containing metallocenter of UreC. The UreE protein probably delivers the nickel.

Its subcellular location is the cytoplasm. Its function is as follows. Required for maturation of urease via the functional incorporation of the urease nickel metallocenter. This Bradyrhizobium sp. (strain BTAi1 / ATCC BAA-1182) protein is Urease accessory protein UreD 3.